Consider the following 533-residue polypeptide: Beta-glucosidase 24 (533 aa).

Residues 1-26 (MVLQKLPLMSIGLLWLLIIVGPLVNA) form the signal peptide. Gln58 is an a beta-D-glucoside binding site. 2 N-linked (GlcNAc...) asparagine glycosylation sites follow: Asn64 and Asn88. Residues His161 and 206–207 (NE) each bind a beta-D-glucoside. Glu207 serves as the catalytic Proton donor. Cys226 and Cys239 are oxidised to a cystine. Tyr355 contributes to the a beta-D-glucoside binding site. The N-linked (GlcNAc...) asparagine glycan is linked to Asn388. Glu427 is an a beta-D-glucoside binding site. The active-site Nucleophile is Glu427. Asn437, Asn442, and Asn470 each carry an N-linked (GlcNAc...) asparagine glycan. Residues Trp477, 484-485 (EW), and Phe493 contribute to the a beta-D-glucoside site. Residue Asn503 is glycosylated (N-linked (GlcNAc...) asparagine). Residues 530-533 (KDEL) carry the Prevents secretion from ER motif.

This sequence belongs to the glycosyl hydrolase 1 family.

The protein localises to the endoplasmic reticulum lumen. The catalysed reaction is Hydrolysis of terminal, non-reducing beta-D-glucosyl residues with release of beta-D-glucose.. The sequence is that of Beta-glucosidase 24 from Arabidopsis thaliana (Mouse-ear cress).